Consider the following 198-residue polypeptide: Leucine-rich melanocyte differentiation-associated protein (198 aa).

LRR repeat units follow at residues 2-22, 26-47, 48-69, and 75-95; these read EKYL…EGLS, SLEE…PGLP, RLHT…LDHL, and ALEY…VSLE. The LRRCT domain occupies 96 to 134; that stretch reads KDEEDYKRYRCFVLYKLPNLKFLDAQKVTRQEREEALVR.

In terms of tissue distribution, in the embryo, expressed in melanoblasts. In the fetus, expressed in melanocytes. Not detected in retinal pigment epithelial cells.

Functionally, required for melanocyte differentiation. This chain is Leucine-rich melanocyte differentiation-associated protein, found in Homo sapiens (Human).